A 382-amino-acid chain; its full sequence is Chaperone protein DnaJ (382 aa).

One can recognise a J domain in the interval 5 to 70 (DYYDLLGLSK…DKRAAYDRYG (66 aa)). The segment at 138–216 (GTKVPINYVT…CSGSGRVRDE (79 aa)) adopts a CR-type zinc-finger fold. Residues C151, C154, C168, C171, C190, C193, C204, and C207 each contribute to the Zn(2+) site. CXXCXGXG motif repeat units lie at residues 151 to 158 (CSSCSGSG), 168 to 175 (CNTCHGAG), 190 to 197 (CHVCNGEG), and 204 to 211 (CKKCSGSG).

Belongs to the DnaJ family. As to quaternary structure, homodimer. Zn(2+) serves as cofactor.

Its subcellular location is the cytoplasm. Its function is as follows. Participates actively in the response to hyperosmotic and heat shock by preventing the aggregation of stress-denatured proteins and by disaggregating proteins, also in an autonomous, DnaK-independent fashion. Unfolded proteins bind initially to DnaJ; upon interaction with the DnaJ-bound protein, DnaK hydrolyzes its bound ATP, resulting in the formation of a stable complex. GrpE releases ADP from DnaK; ATP binding to DnaK triggers the release of the substrate protein, thus completing the reaction cycle. Several rounds of ATP-dependent interactions between DnaJ, DnaK and GrpE are required for fully efficient folding. Also involved, together with DnaK and GrpE, in the DNA replication of plasmids through activation of initiation proteins. In Ehrlichia ruminantium (strain Welgevonden), this protein is Chaperone protein DnaJ.